The following is a 525-amino-acid chain: MDNVPIIRTVSGLRHFLRCFPGNLNTGASPSSTVIGQIGLVPTMGALHAGHLSLIQRARQENQCVIVSIFVNPLQFAAHEDLTEYPQTLNQDQALCQEQGVNTIFAPSTDTLLADAPLTQVIPPASLTEYLCGPHRPDHFTGVATIVLKLLNIVQPTRAYFGQKDAQQLAIIQRLVQDFNLDVTIVPCKLIRDATGLALSSRNQYLNAQEAQQATILHHSLQAARHTFQGGSCDRNSVLATVAQTLAKGPQVEVEYIDLVDPVTLQPLEQITTQGLVAIAARVGSARLIDNMLLDARLPILAIDGPAGAGKSTVTRRCAQAIGLQYLDTGAMYRAVAWLALDQQVEVSDPFAIADLVEDCQIELKPHADPQQQPQVWVNHQEVTQAIRTPDVTALVSAVAAQPPVREALVKQQQRLGRQGGLIAEGRDIGTNVFPDAGLKIFLTASIEERARRRQQDLKNQNLPPQTQSELEDLIASRDQQDSQREFAPLRKAYDAVEINTDGMTIEQVITRITTLYQERFPDRA.

The interval 1–292 (MDNVPIIRTV…VGSARLIDNM (292 aa)) is pantoate--beta-alanine ligase. 44-51 (MGALHAGH) contributes to the ATP binding site. H51 acts as the Proton donor in catalysis. Q75 contacts (R)-pantoate. A beta-alanine-binding site is contributed by Q75. 162–165 (GQKD) is a binding site for ATP. Q168 provides a ligand contact to (R)-pantoate. Residues I191 and 199–202 (LSSR) contribute to the ATP site. The segment at 293–525 (LLDARLPILA…LYQERFPDRA (233 aa)) is cytidylate kinase.

This sequence in the N-terminal section; belongs to the pantothenate synthetase family. The protein in the C-terminal section; belongs to the cytidylate kinase family. Type 1 subfamily.

The protein localises to the cytoplasm. The enzyme catalyses (R)-pantoate + beta-alanine + ATP = (R)-pantothenate + AMP + diphosphate + H(+). It carries out the reaction CMP + ATP = CDP + ADP. It catalyses the reaction dCMP + ATP = dCDP + ADP. It participates in cofactor biosynthesis; (R)-pantothenate biosynthesis; (R)-pantothenate from (R)-pantoate and beta-alanine: step 1/1. Functionally, catalyzes the condensation of pantoate with beta-alanine in an ATP-dependent reaction via a pantoyl-adenylate intermediate. In terms of biological role, catalyzes the transfer of a phosphate group from ATP to either CMP or dCMP to form CDP or dCDP and ADP, respectively. The sequence is that of Bifunctional pantoate ligase/cytidylate kinase from Acaryochloris marina (strain MBIC 11017).